The sequence spans 224 residues: Small ribosomal subunit protein eS1 (224 aa).

It belongs to the eukaryotic ribosomal protein eS1 family.

The sequence is that of Small ribosomal subunit protein eS1 from Methanococcus maripaludis (strain C7 / ATCC BAA-1331).